Reading from the N-terminus, the 69-residue chain is Cytochrome c oxidase subunit 8A, mitochondrial (69 aa).

Residues 1-25 (MYVVTPLLLRGLTGSARRLPVPRAQ) constitute a mitochondrion transit peptide. An SIFI-degron motif is present at residues 2–19 (YVVTPLLLRGLTGSARRL). Residues 26 to 36 (VHSMPPEQKLG) are Mitochondrial matrix-facing. A helical transmembrane segment spans residues 37-60 (VLELAIGFTSCMVTFLLPAGWIMS). At 61–69 (HLESYKKRG) the chain is on the mitochondrial intermembrane side.

Belongs to the cytochrome c oxidase VIII family. In terms of assembly, component of the cytochrome c oxidase (complex IV, CIV), a multisubunit enzyme composed of 14 subunits. The complex is composed of a catalytic core of 3 subunits MT-CO1, MT-CO2 and MT-CO3, encoded in the mitochondrial DNA, and 11 supernumerary subunits COX4I, COX5A, COX5B, COX6A, COX6B, COX6C, COX7A, COX7B, COX7C, COX8 and NDUFA4, which are encoded in the nuclear genome. The complex exists as a monomer or a dimer and forms supercomplexes (SCs) in the inner mitochondrial membrane with NADH-ubiquinone oxidoreductase (complex I, CI) and ubiquinol-cytochrome c oxidoreductase (cytochrome b-c1 complex, complex III, CIII), resulting in different assemblies (supercomplex SCI(1)III(2)IV(1) and megacomplex MCI(2)III(2)IV(2)). In terms of processing, in response to mitochondrial stress, the precursor protein is ubiquitinated by the SIFI complex in the cytoplasm before mitochondrial import, leading to its degradation. Within the SIFI complex, UBR4 initiates ubiquitin chain that are further elongated or branched by KCMF1.

Its subcellular location is the mitochondrion inner membrane. Its pathway is energy metabolism; oxidative phosphorylation. In terms of biological role, component of the cytochrome c oxidase, the last enzyme in the mitochondrial electron transport chain which drives oxidative phosphorylation. The respiratory chain contains 3 multisubunit complexes succinate dehydrogenase (complex II, CII), ubiquinol-cytochrome c oxidoreductase (cytochrome b-c1 complex, complex III, CIII) and cytochrome c oxidase (complex IV, CIV), that cooperate to transfer electrons derived from NADH and succinate to molecular oxygen, creating an electrochemical gradient over the inner membrane that drives transmembrane transport and the ATP synthase. Cytochrome c oxidase is the component of the respiratory chain that catalyzes the reduction of oxygen to water. Electrons originating from reduced cytochrome c in the intermembrane space (IMS) are transferred via the dinuclear copper A center (CU(A)) of subunit 2 and heme A of subunit 1 to the active site in subunit 1, a binuclear center (BNC) formed by heme A3 and copper B (CU(B)). The BNC reduces molecular oxygen to 2 water molecules using 4 electrons from cytochrome c in the IMS and 4 protons from the mitochondrial matrix. This chain is Cytochrome c oxidase subunit 8A, mitochondrial (COX8A), found in Ateles belzebuth (White-bellied spider monkey).